Consider the following 73-residue polypeptide: Translation initiation factor IF-1 2 (73 aa).

In terms of domain architecture, S1-like spans Met-1 to Lys-72.

It belongs to the IF-1 family. In terms of assembly, component of the 30S ribosomal translation pre-initiation complex which assembles on the 30S ribosome in the order IF-2 and IF-3, IF-1 and N-formylmethionyl-tRNA(fMet); mRNA recruitment can occur at any time during PIC assembly.

It localises to the cytoplasm. In terms of biological role, one of the essential components for the initiation of protein synthesis. Stabilizes the binding of IF-2 and IF-3 on the 30S subunit to which N-formylmethionyl-tRNA(fMet) subsequently binds. Helps modulate mRNA selection, yielding the 30S pre-initiation complex (PIC). Upon addition of the 50S ribosomal subunit IF-1, IF-2 and IF-3 are released leaving the mature 70S translation initiation complex. The protein is Translation initiation factor IF-1 2 of Cupriavidus pinatubonensis (strain JMP 134 / LMG 1197) (Cupriavidus necator (strain JMP 134)).